Here is a 325-residue protein sequence, read N- to C-terminus: Lipoyl synthase (325 aa).

The disordered stretch occupies residues 1–31; sequence MASDSDLLDTKPAETRHPEKAHRPDQPTLRK. The segment covering 8–31 has biased composition (basic and acidic residues); that stretch reads LDTKPAETRHPEKAHRPDQPTLRK. Residues cysteine 61, cysteine 66, cysteine 72, cysteine 87, cysteine 91, cysteine 94, and serine 300 each coordinate [4Fe-4S] cluster. The Radical SAM core domain occupies 73–289; that stretch reads WAKKHATFMI…AEIGRAKGFL (217 aa).

The protein belongs to the radical SAM superfamily. Lipoyl synthase family. [4Fe-4S] cluster serves as cofactor.

Its subcellular location is the cytoplasm. The enzyme catalyses [[Fe-S] cluster scaffold protein carrying a second [4Fe-4S](2+) cluster] + N(6)-octanoyl-L-lysyl-[protein] + 2 oxidized [2Fe-2S]-[ferredoxin] + 2 S-adenosyl-L-methionine + 4 H(+) = [[Fe-S] cluster scaffold protein] + N(6)-[(R)-dihydrolipoyl]-L-lysyl-[protein] + 4 Fe(3+) + 2 hydrogen sulfide + 2 5'-deoxyadenosine + 2 L-methionine + 2 reduced [2Fe-2S]-[ferredoxin]. The protein operates within protein modification; protein lipoylation via endogenous pathway; protein N(6)-(lipoyl)lysine from octanoyl-[acyl-carrier-protein]: step 2/2. Functionally, catalyzes the radical-mediated insertion of two sulfur atoms into the C-6 and C-8 positions of the octanoyl moiety bound to the lipoyl domains of lipoate-dependent enzymes, thereby converting the octanoylated domains into lipoylated derivatives. In Methylocella silvestris (strain DSM 15510 / CIP 108128 / LMG 27833 / NCIMB 13906 / BL2), this protein is Lipoyl synthase.